A 276-amino-acid chain; its full sequence is Hydroxyethylthiazole kinase (276 aa).

Substrate contacts are provided by Met53 and Ala202.

Belongs to the Thz kinase family. It depends on Mg(2+) as a cofactor.

The catalysed reaction is 5-(2-hydroxyethyl)-4-methylthiazole + ATP = 4-methyl-5-(2-phosphooxyethyl)-thiazole + ADP + H(+). It participates in cofactor biosynthesis; thiamine diphosphate biosynthesis; 4-methyl-5-(2-phosphoethyl)-thiazole from 5-(2-hydroxyethyl)-4-methylthiazole: step 1/1. In terms of biological role, thiazole kinase involved in thiamine salvage pathway. The sequence is that of Hydroxyethylthiazole kinase (THIM) from Arabidopsis thaliana (Mouse-ear cress).